The primary structure comprises 360 residues: 3-dehydroquinate synthase (360 aa).

NAD(+) is bound by residues Asp70 to Lys75, Gly104 to Asp108, Thr128 to Thr129, Lys141, and Lys150. Glu183, His246, and His263 together coordinate Zn(2+).

It belongs to the sugar phosphate cyclases superfamily. Dehydroquinate synthase family. Co(2+) serves as cofactor. Requires Zn(2+) as cofactor. NAD(+) is required as a cofactor.

It localises to the cytoplasm. It carries out the reaction 7-phospho-2-dehydro-3-deoxy-D-arabino-heptonate = 3-dehydroquinate + phosphate. The protein operates within metabolic intermediate biosynthesis; chorismate biosynthesis; chorismate from D-erythrose 4-phosphate and phosphoenolpyruvate: step 2/7. Catalyzes the conversion of 3-deoxy-D-arabino-heptulosonate 7-phosphate (DAHP) to dehydroquinate (DHQ). The protein is 3-dehydroquinate synthase of Acinetobacter baumannii (strain SDF).